We begin with the raw amino-acid sequence, 263 residues long: Acetylglutamate kinase (263 aa).

Substrate is bound by residues 48–49 (GG), Arg70, and Asn162.

Belongs to the acetylglutamate kinase family. ArgB subfamily.

Its subcellular location is the cytoplasm. It catalyses the reaction N-acetyl-L-glutamate + ATP = N-acetyl-L-glutamyl 5-phosphate + ADP. It participates in amino-acid biosynthesis; L-arginine biosynthesis; N(2)-acetyl-L-ornithine from L-glutamate: step 2/4. Functionally, catalyzes the ATP-dependent phosphorylation of N-acetyl-L-glutamate. The chain is Acetylglutamate kinase from Vibrio vulnificus (strain CMCP6).